We begin with the raw amino-acid sequence, 575 residues long: Transcription factor COE2 (575 aa).

Positions 62–65 (RKSN) are interaction with DNA. A C5-type zinc finger spans residues 150 to 169 (CRVLLTHEVMCSRCCEKKSC). Interaction with DNA regions lie at residues 196 to 203 (NCLKTAGN) and 235 to 238 (NNSK). Residues 253 to 336 (PCIKAISPSE…KGAPGRFIYT (84 aa)) form the IPT/TIG domain. A compositionally biased stretch (polar residues) spans 441–453 (STQGNNQGYIRNT). The segment at 441–479 (STQGNNQGYIRNTSSISPRGYSSSSTPQQSNYSTSSNSM) is disordered. Positions 454–479 (SSISPRGYSSSSTPQQSNYSTSSNSM) are enriched in low complexity.

Belongs to the COE family. In terms of assembly, forms either a homodimer or a heterodimer with a related family member. Interacts with SIX1. As to expression, in adult expressed in olfactory epithelium and at a much lower level in Purkinje cells of the cerebellum. In embryo expressed in epithalamus, in cells near the ventricular zone of mesencephalon and on the ventral surface of rhombencephalon, in the developing vomeronasal organ, at a lower level in developing spinal cord. Not expressed in developing retina, inner ear, dorsal root ganglia, trigeminal ganglia and glossopharyngeal ganglia.

Its subcellular location is the nucleus. In terms of biological role, transcription factor that, in osteoblasts, activates the decoy receptor for RANKL, TNFRSF11B, which in turn regulates osteoclast differentiation. Acts in synergy with the Wnt-responsive LEF1/CTNNB1 pathway. Recognizes variations of the palindromic sequence 5'-ATTCCCNNGGGAATT-3'. The chain is Transcription factor COE2 (Ebf2) from Mus musculus (Mouse).